Reading from the N-terminus, the 149-residue chain is MTTAQHEGEQTVAAAAKIAMSSVAPSHRQGGSTRALLTPSSVGATSGFLGHIELAPGESVTEHYHPFSDKYLYLIEGSLVVRVNGEEVRLERDEALFVTRGQRHRIENRGNVPARVVFQISPLAPRPELGHVDTEPVPNPAAAPPKVGG.

Positions 51–117 (HIELAPGESV…NRGNVPARVV (67 aa)) constitute a Cupin type-2 domain. The segment at 127–149 (PELGHVDTEPVPNPAAAPPKVGG) is disordered.

The tetracenomycin polyketide synthase (TCM PKS) is composed of a ketosynthase complex (TcmKL), an acyl carrier protein (TcmM), a cyclase (TcmN) and a probable second cyclase (TcmJ).

The enzyme catalyses 10 malonyl-CoA + 8 H(+) = tetracenomycin F2 + 10 CO2 + 10 CoA + 2 H2O. Its pathway is antibiotic biosynthesis; tetracenomycin C biosynthesis. Functionally, involved in the biosynthesis of tetracenomycin C (TCM C). Part of a type II polyketide synthase (PKS) that catalyzes the synthesis of tetracenomycin F2 (TCM F2), a precursor of TCM C, from malonyl-CoA. TcmJ, while not absolutely required, greatly increases the tetracenomycin F2 production. It probably acts as a cyclase. This chain is Tetracenomycin polyketide synthase protein TcmJ, found in Streptomyces glaucescens.